The primary structure comprises 382 residues: Sphingoid long-chain base transporter RSB1 (382 aa).

Over methionine 1–arginine 34 the chain is Extracellular. N-linked (GlcNAc...) asparagine glycosylation is found at asparagine 3 and asparagine 6. Residues phenylalanine 35–leucine 55 traverse the membrane as a helical segment. Residues methionine 56–arginine 57 lie on the Cytoplasmic side of the membrane. Residues glutamine 58–glycine 78 form a helical membrane-spanning segment. Residues arginine 79–aspartate 90 are Extracellular-facing. The chain crosses the membrane as a helical span at residues alanine 91–tyrosine 111. The Cytoplasmic segment spans residues tyrosine 112 to serine 135. Residues phenylalanine 136–cysteine 156 form a helical membrane-spanning segment. The Extracellular segment spans residues glycine 157–histidine 171. Residues valine 172–phenylalanine 192 traverse the membrane as a helical segment. The Cytoplasmic segment spans residues histidine 193 to arginine 241. Residues tryptophan 242–cysteine 262 form a helical membrane-spanning segment. Over cysteine 263–glutamate 281 the chain is Extracellular. A helical transmembrane segment spans residues tryptophan 282–phenylalanine 302. At histidine 303 to leucine 382 the chain is on the cytoplasmic side.

This sequence belongs to the lipid-translocating exporter (LTE) (TC 9.A.26.1) family.

The protein localises to the cell membrane. Its function is as follows. Catalyzes the ATP-dependent translocation of sphingoid long-chain bases (LCBs) from the cytoplasmic site toward the extracytoplasmic side of the membrane (flip-flop). Involved in the establishment of the functional lipid asymmetry of the plasma membrane. Regulates intracellular levels of LCBs, sphingolipid precursors that are growth inhibitory at increased levels. This Saccharomyces cerevisiae (strain Lalvin EC1118 / Prise de mousse) (Baker's yeast) protein is Sphingoid long-chain base transporter RSB1 (RSB1).